A 328-amino-acid polypeptide reads, in one-letter code: Malate dehydrogenase (328 aa).

Residue 12-18 coordinates NAD(+); the sequence is GAAGQIA. Arg-93 and Arg-99 together coordinate substrate. NAD(+)-binding positions include Asn-106, Gln-113, and 130–132; that span reads VGN. 2 residues coordinate substrate: Asn-132 and Arg-163. His-188 acts as the Proton acceptor in catalysis.

This sequence belongs to the LDH/MDH superfamily. MDH type 2 family.

The catalysed reaction is (S)-malate + NAD(+) = oxaloacetate + NADH + H(+). In terms of biological role, catalyzes the reversible oxidation of malate to oxaloacetate. The sequence is that of Malate dehydrogenase from Burkholderia lata (strain ATCC 17760 / DSM 23089 / LMG 22485 / NCIMB 9086 / R18194 / 383).